The primary structure comprises 793 residues: Splicing factor 3A subunit 1 (793 aa).

Residues 1-42 (MPAGPVQAVPPPPPAATEPKQPTEEEASSKEDSTPSKPVVGI) form a disordered region. K20 participates in a covalent cross-link: Glycyl lysine isopeptide (Lys-Gly) (interchain with G-Cter in SUMO2). Positions 21–34 (QPTEEEASSKEDST) are enriched in basic and acidic residues. The stretch at 52 to 94 (IVDKTASFVARNGPEFEARIRQNEINNPKFNFLNPNDPYHAYY) is one SURP motif 1 repeat. At K55 the chain carries N6-acetyllysine. A Glycyl lysine isopeptide (Lys-Gly) (interchain with G-Cter in SUMO2) cross-link involves residue K131. The SURP motif 2 repeat unit spans residues 166 to 208 (VVKLTAQFVARNGRQFLTQLMQKEQRNYQFDFLRPQHSLFNYF). Residues 318-412 (GESEEVEMEV…PAPAPDEYLV (95 aa)) form a disordered region. Phosphoserine is present on residues S320, S329, and S359. Acidic residues-rich tracts occupy residues 320–334 (SEEV…EEDE) and 354–364 (DMDEGSDDEEE). Residues 368–384 (VPPPPETPMPPPLPPTP) show a composition bias toward pro residues. The span at 388–397 (IVRKDYDPKA) shows a compositional bias: basic and acidic residues. S413 bears the Phosphoserine mark. K424 participates in a covalent cross-link: Glycyl lysine isopeptide (Lys-Gly) (interchain with G-Cter in SUMO2). S451 is subject to Phosphoserine. A Phosphotyrosine modification is found at Y456. Residues 488-502 (IGEEEIQKPEEKVTW) show a composition bias toward basic and acidic residues. 3 disordered regions span residues 488-518 (IGEE…AAQA), 530-584 (HKAK…AMPP), and 666-685 (PMPP…SKKL). K499 participates in a covalent cross-link: Glycyl lysine isopeptide (Lys-Gly) (interchain with G-Cter in SUMO2). Residue S508 is modified to Phosphoserine. Polar residues predominate over residues 509–518 (MARTQQAAQA). A Glycyl lysine isopeptide (Lys-Gly) (interchain with G-Cter in SUMO2) cross-link involves residue K542. Polar residues predominate over residues 563–572 (ATNIPSSAPP). Residues 666–675 (PMPPVHPPPP) are compositionally biased toward pro residues. The segment at 680–702 (PASKKLKTEDSLMPEEEFLRRNK) is required and sufficient for nuclear import. A Glycyl lysine isopeptide (Lys-Gly) (interchain with G-Cter in SUMO2) cross-link involves residue K686. A Ubiquitin-like domain is found at 707–793 (IKVQVPNMQD…ALKERGGRKK (87 aa)). At Y759 the chain carries Phosphotyrosine.

Component of the 17S U2 SnRNP complex, a ribonucleoprotein complex that contains small nuclear RNA (snRNA) U2 and a number of specific proteins. Part of the SF3A subcomplex of the 17S U2 SnRNP complex which is composed of three subunits; SF3A3/SAP61, SF3A2/SAP62 and SF3A1/SAP114. SF3A associates with the splicing factor SF3B and a 12S RNA unit to form the mature 17S U2 small nuclear ribonucleoprotein complex (17S U2 snRNP). SF3A1 functions as a scaffold that interacts directly with both SF3A2 and SF3A3. Identified in the spliceosome 'E' complex, a precursor of the spliceosome 'A' complex. Identified in the spliceosome 'A' and 'B' complexes. Identified in the spliceosome 'C' complex. Interacts with P2RX6; resulting in a reduction of the splicing activity.

It is found in the nucleus. Its subcellular location is the nucleus speckle. Its function is as follows. Component of the 17S U2 SnRNP complex of the spliceosome, a large ribonucleoprotein complex that removes introns from transcribed pre-mRNAs. The 17S U2 SnRNP complex (1) directly participates in early spliceosome assembly and (2) mediates recognition of the intron branch site during pre-mRNA splicing by promoting the selection of the pre-mRNA branch-site adenosine, the nucleophile for the first step of splicing. Within the 17S U2 SnRNP complex, SF3A1 is part of the SF3A subcomplex that contributes to the assembly of the 17S U2 snRNP, and the subsequent assembly of the pre-spliceosome 'E' complex and the pre-catalytic spliceosome 'A' complex. Involved in pre-mRNA splicing as a component of pre-catalytic spliceosome 'B' complexes. This is Splicing factor 3A subunit 1 (SF3A1) from Bos taurus (Bovine).